The following is a 271-amino-acid chain: Chitinase 6 (271 aa).

Residues 1–20 form the signal peptide; it reads MARRLSLLAVVLAMVAAVSA. The region spanning 25–60 is the Chitin-binding type-1 domain; it reads AQSCGCASDQCCSKWGFCGTGSDYCGTGCQAGPCDV. Intrachain disulfides connect Cys28-Cys36, Cys30-Cys42, Cys35-Cys49, Cys88-Cys137, Cys150-Cys159, and Cys239-Cys271. The Proton donor role is filled by Glu132. Asn268 carries an N-linked (GlcNAc...) asparagine glycan.

The protein belongs to the glycosyl hydrolase 19 family. Chitinase class IV subfamily. As to expression, expressed in roots, leaves, sheaths and meristems.

It carries out the reaction Random endo-hydrolysis of N-acetyl-beta-D-glucosaminide (1-&gt;4)-beta-linkages in chitin and chitodextrins.. Its function is as follows. May function in reproductive organs during embryogenesis and seed maturation. The protein is Chitinase 6 (Cht6) of Oryza sativa subsp. japonica (Rice).